The following is a 428-amino-acid chain: GTPase Obg (428 aa).

Positions 1-158 (MFVDKVKVYA…RNLLLELKVL (158 aa)) constitute an Obg domain. In terms of domain architecture, OBG-type G spans 159–329 (ADVGLVGFPS…LMLAIADELE (171 aa)). Residues 165–172 (GFPSVGKS), 190–194 (FTTIT), 212–215 (DLPG), 282–285 (NKMD), and 310–312 (SAI) contribute to the GTP site. Mg(2+)-binding residues include Ser172 and Thr192. The OCT domain maps to 350–428 (KHELPIEPFT…IMKFEFEFVE (79 aa)).

The protein belongs to the TRAFAC class OBG-HflX-like GTPase superfamily. OBG GTPase family. In terms of assembly, monomer. Mg(2+) serves as cofactor.

It localises to the cytoplasm. Functionally, an essential GTPase which binds GTP, GDP and possibly (p)ppGpp with moderate affinity, with high nucleotide exchange rates and a fairly low GTP hydrolysis rate. Plays a role in control of the cell cycle, stress response, ribosome biogenesis and in those bacteria that undergo differentiation, in morphogenesis control. The protein is GTPase Obg of Shouchella clausii (strain KSM-K16) (Alkalihalobacillus clausii).